Here is a 235-residue protein sequence, read N- to C-terminus: Enolase-phosphatase E1 (235 aa).

This sequence belongs to the HAD-like hydrolase superfamily. MasA/MtnC family. Monomer. The cofactor is Mg(2+).

It carries out the reaction 5-methylsulfanyl-2,3-dioxopentyl phosphate + H2O = 1,2-dihydroxy-5-(methylsulfanyl)pent-1-en-3-one + phosphate. The protein operates within amino-acid biosynthesis; L-methionine biosynthesis via salvage pathway; L-methionine from S-methyl-5-thio-alpha-D-ribose 1-phosphate: step 3/6. It participates in amino-acid biosynthesis; L-methionine biosynthesis via salvage pathway; L-methionine from S-methyl-5-thio-alpha-D-ribose 1-phosphate: step 4/6. Bifunctional enzyme that catalyzes the enolization of 2,3-diketo-5-methylthiopentyl-1-phosphate (DK-MTP-1-P) into the intermediate 2-hydroxy-3-keto-5-methylthiopentenyl-1-phosphate (HK-MTPenyl-1-P), which is then dephosphorylated to form the acireductone 1,2-dihydroxy-3-keto-5-methylthiopentene (DHK-MTPene). This Parvibaculum lavamentivorans (strain DS-1 / DSM 13023 / NCIMB 13966) protein is Enolase-phosphatase E1.